Reading from the N-terminus, the 127-residue chain is Fumarate reductase subunit C (127 aa).

The next 3 helical transmembrane spans lie at 30–50, 58–78, and 107–127; these read ATVL…GSLV, GWLS…ALLG, and IIVL…LMVV.

This sequence belongs to the FrdC family. As to quaternary structure, part of an enzyme complex containing four subunits: a flavoprotein (FrdA), an iron-sulfur protein (FrdB), and two hydrophobic anchor proteins (FrdC and FrdD).

It localises to the cell inner membrane. Anchors the catalytic components of the fumarate reductase complex to the cell membrane, binds quinones. This is Fumarate reductase subunit C from Vibrio atlanticus (strain LGP32) (Vibrio splendidus (strain Mel32)).